We begin with the raw amino-acid sequence, 222 residues long: LexA repressor (222 aa).

The H-T-H motif DNA-binding region spans Ile-28–Lys-48. Residues Ser-135 and Lys-172 each act as for autocatalytic cleavage activity in the active site.

The protein belongs to the peptidase S24 family. In terms of assembly, homodimer.

The enzyme catalyses Hydrolysis of Ala-|-Gly bond in repressor LexA.. Represses a number of genes involved in the response to DNA damage (SOS response), including recA and lexA. In the presence of single-stranded DNA, RecA interacts with LexA causing an autocatalytic cleavage which disrupts the DNA-binding part of LexA, leading to derepression of the SOS regulon and eventually DNA repair. In Myxococcus xanthus (strain DK1622), this protein is LexA repressor.